The chain runs to 802 residues: E3 ubiquitin-protein ligase UHRF2 (802 aa).

Residues 1-78 (MWIQVRTIDG…IQLLVRPDPD (78 aa)) form the Ubiquitin-like domain. 2 disordered regions span residues 80–116 (LPGT…TSAR) and 153–197 (RASD…STSN). Polar residues-rich tracts occupy residues 82-96 (GTST…SNSP), 153-177 (RASD…TNGN), and 188-197 (KLDSVPSTSN). A required for interaction with histone H3 region spans residues 117 to 311 (ARLIDPGFGI…VDEIFKIERP (195 aa)). Residues 194–288 (STSNSDCVAA…KELRVKIFLG (95 aa)) are interaction with PCNP. Residues 344-395 (SCSCRVCGGKHEPNMQLLCDECNVAYHIYCLNPPLDKVPEEEYWYCPSCKTD) form a PHD-type zinc finger. Residues 414-644 (KMPSASTESR…LQYPAGYPSD (231 aa)) are methyl-CpG binding and interaction with HDAC1. One can recognise a YDG domain in the interval 448 to 612 (GPIPGIPVGS…FLVWRYLLRR (165 aa)). The disordered stretch occupies residues 640 to 674 (GYPSDKEGKKPKGQSKKQPSGTTKRPISDDDCPSA). Position 667 is a phosphoserine (serine 667). The RING-type zinc-finger motif lies at 733–772 (CVCCQELVYQPVTTECFHNVCKDCLQRSFKAQVFSCPACR).

Homodimer; disulfide-linked. Binds methylated CpG containing oligonucleotides. Interacts with H3; the interaction has a preference for the 'Lys-9' trimethylated form of H3 (H3K9me3). Interacts with PCNP. Interacts with HDAC1. Interacts directly with CCNE1; the interaction ubiquitinates CCNE1 and appears independent of CCNE1 phosphorylation. Interacts with CCND1; the interaction ubiquitinates CCND1 and appears independent of CCND1 phosphorylation. Interacts with p53/TP53 and RB1. Interacts with UBE2I. Interacts with ZNF618. Interacts with UHRF1. Interacts with FANCD2. Interacts with ATR. Interacts with PCNA. Post-translationally, may be autoubiquitinated; which may lead to proteasomal degradation. In terms of processing, phosphorylated. Phosphorylation may be mediated by CDK2. Autosumoylated.

The protein resides in the nucleus. It is found in the chromosome. It catalyses the reaction S-ubiquitinyl-[E2 ubiquitin-conjugating enzyme]-L-cysteine + [acceptor protein]-L-lysine = [E2 ubiquitin-conjugating enzyme]-L-cysteine + N(6)-ubiquitinyl-[acceptor protein]-L-lysine.. The protein operates within protein modification; protein ubiquitination. E3 ligase activity is robustly activated by 5-hydroxymethylcytosine. In terms of biological role, E3 ubiquitin ligase that plays important roles in DNA methylation, histone modifications, cell cycle and DNA repair. Acts as a specific reader for 5-hydroxymethylcytosine (5hmC) and thereby recruits various substrates to these sites to ubiquitinate them. This activity also allows the maintenance of 5mC levels at specific genomic loci and regulates neuron-related gene expression. Participates in cell cycle regulation by ubiquitinating cyclins CCND1 and CCNE1 and thereby inducing G1 arrest. Also ubiquitinates PCNP leading to its degradation by the proteasome. Plays an active role in DNA damage repair by ubiquitinating p21/CDKN1A leading to its proteasomal degradation. Also promotes DNA repair by acting as an interstrand cross-links (ICLs) sensor. Mechanistically, cooperates with UHRF1 to ensure recruitment of FANCD2 to ICLs, leading to FANCD2 monoubiquitination and subsequent activation. Contributes to UV-induced DNA damage response by physically interacting with ATR in response to irradiation, thereby promoting ATR activation. The sequence is that of E3 ubiquitin-protein ligase UHRF2 (UHRF2) from Homo sapiens (Human).